A 609-amino-acid chain; its full sequence is RAS guanyl-releasing protein 2 (609 aa).

Ala-2 carries the N-myristoyl glycine lipid modification. Residues Thr-4 to Thr-126 enclose the N-terminal Ras-GEF domain. Leu-7 carries the S-palmitoyl cysteine lipid modification. Ser-116, Ser-117, and Ser-147 each carry phosphoserine. Residues Glu-154 to Arg-387 form the Ras-GEF domain. Residues Leu-382–Val-406 are disordered. EF-hand domains lie at His-426–Leu-461 and Arg-455–Val-490. Ca(2+) contacts are provided by Asp-439, Asp-441, Asp-443, His-445, Glu-450, Asp-468, Asn-470, Asp-472, Cys-474, and Glu-479. A Phorbol-ester/DAG-type zinc finger spans residues Val-498–Cys-548. Residues Ser-554 and Ser-576 each carry the phosphoserine modification. Positions Leu-557–Ile-592 are disordered.

It belongs to the RASGRP family. Forms a signaling complex with RAP1 and BRAF. Interacts with RAP1. Interacts with F-actin. Isoform 2 is palmitoylated and myristoylated. Detected in platelets, neutrophils and T lymphocytes (at protein level). Expressed in brain where it is enriched in the striatum. Also expressed in the hematopoietic system. Detected in heart, brain, lung, placenta, liver, skeletal muscle and kidney.

It localises to the cytoplasm. The protein resides in the cytosol. Its subcellular location is the cell membrane. It is found in the synapse. The protein localises to the synaptosome. It localises to the cell projection. The protein resides in the ruffle membrane. With respect to regulation, isoform 1 and isoform 2 are differently regulated by calcium and DAG. Functionally, functions as a calcium- and DAG-regulated nucleotide exchange factor specifically activating Rap through the exchange of bound GDP for GTP. May also activate other GTPases such as RRAS, RRAS2, NRAS, KRAS but not HRAS. Functions in aggregation of platelets and adhesion of T-lymphocytes and neutrophils probably through inside-out integrin activation. May function in the muscarinic acetylcholine receptor M1/CHRM1 signaling pathway. The protein is RAS guanyl-releasing protein 2 (RASGRP2) of Homo sapiens (Human).